The sequence spans 270 residues: Splicing factor YJU2 (270 aa).

The segment at 1 to 32 (MSERKVLNKYIPPDYDPSIRPPKKKKKFQGPN) is disordered. Residues Cys-48, Cys-51, Cys-84, and Cys-87 each contribute to the Zn(2+) site. The disordered stretch occupies residues 251–270 (PNFQPPKYAKRKMEKKKVLV). The segment covering 258–270 (YAKRKMEKKKVLV) has biased composition (basic residues).

The protein belongs to the CWC16 family. YJU2 subfamily. Component of the spliceosome. Present in the activated B complex, the catalytically activated B* complex which catalyzes the branching, the catalytic step 1 C complex catalyzing the exon ligation, and the postcatalytic P complex containing the ligated exons (mRNA) and the excised lariat intron. Belongs to the 40S cdc5-associated complex (or cwf complex), a spliceosome sub-complex reminiscent of a late-stage spliceosome composed of the U2, U5 and U6 snRNAs and at least brr2, cdc5, cwf2/prp3, cwf3/syf1, cwf4/syf3, cwf5/ecm2, spp42/cwf6, cwf7/spf27, cwf8, cwf9, cwf10, cwf11, cwf12, prp45/cwf13, cwf14, cwf15, cwf16, cwf17, cwf18, cwf19, cwf20, cwf21, cwf22, cwf23, cwf24, cwf25, cwf26, cyp7/cwf27, cwf28, cwf29/ist3, lea1, msl1, prp5/cwf1, prp10, prp12/sap130, prp17, prp22, sap61, sap62, sap114, sap145, slu7, smb1, smd1, smd3, smf1, smg1 and syf2.

The protein resides in the nucleus. In terms of biological role, part of the spliceosome which catalyzes two sequential transesterification reactions, first the excision of the non-coding intron from pre-mRNA and then the ligation of the coding exons to form the mature mRNA. Plays a role in stabilizing the structure of the spliceosome catalytic core and docking of the branch helix into the active site, producing 5'-exon and lariat intron-3'-intermediates. The polypeptide is Splicing factor YJU2 (cwf16) (Schizosaccharomyces pombe (strain 972 / ATCC 24843) (Fission yeast)).